The chain runs to 108 residues: uncharacterized protein (108 aa).

The segment covering 39-68 has biased composition (low complexity); that stretch reads GLRSRSGTGSGNSRNGLKESGGSRSGPGKP. The segment at 39 to 95 is disordered; it reads GLRSRSGTGSGNSRNGLKESGGSRSGPGKPRGNRKSSRRIRPRPTSEKPRGYWRSSW. Positions 69–80 are enriched in basic residues; it reads RGNRKSSRRIRP.

This is an uncharacterized protein from Acidithiobacillus ferridurans.